The primary structure comprises 786 residues: DNA ligase (786 aa).

NAD(+)-binding positions include 32-36 (DAEYD), 81-82 (SL), and Glu121. Catalysis depends on Lys123, which acts as the N6-AMP-lysine intermediate. Residues Arg144, Glu181, Lys297, and Lys321 each contribute to the NAD(+) site. Zn(2+) contacts are provided by Cys415, Cys418, Cys445, and Cys451. A BRCT domain is found at 703–786 (AEGLPLAGQT…EQLKSYGIEA (84 aa)).

Belongs to the NAD-dependent DNA ligase family. LigA subfamily. Requires Mg(2+) as cofactor. The cofactor is Mn(2+).

The catalysed reaction is NAD(+) + (deoxyribonucleotide)n-3'-hydroxyl + 5'-phospho-(deoxyribonucleotide)m = (deoxyribonucleotide)n+m + AMP + beta-nicotinamide D-nucleotide.. Its function is as follows. DNA ligase that catalyzes the formation of phosphodiester linkages between 5'-phosphoryl and 3'-hydroxyl groups in double-stranded DNA using NAD as a coenzyme and as the energy source for the reaction. It is essential for DNA replication and repair of damaged DNA. In Ectopseudomonas mendocina (strain ymp) (Pseudomonas mendocina), this protein is DNA ligase.